A 472-amino-acid chain; its full sequence is MSKKLEKITTRKENFADWYTSIVNNAKLIQYTDIKGMMVFQPNAWAIWEAIKNQIDVEFKKHGVRNLAMPTLIPLSEFQKEKDHIEGFAPELFMVNQIGDKKLDNSYAIRPTSEILFCNYFKNIVNSYNDLPIKNNQWCSVMRAEKTTRPFLRNAEFHWQELHAIFASENEADSFAKVILDVYTDFVQNYLCIPVIKGLKTPWERFAGAQKTYTIEAMMQDGQALQSATSHYLGQFFAKAYDIKFQGQDNQMHYVHQMSAGLSTRIIGALIMVHADDQGLILPPDIAFNQIAILTIFSNKNPQLLKISQQICEQLNNYRLFEDHSDKGIGYKLAQQEIEGTPICILVGAKELVNQQVVIVRRDTHEKINVDLTDLKLIIPKLLADIKRNIYEKAKKDLEDSIVFVNNIEELKQVIAQNKMAKAFFDGTKEDDEQIKLLTNASTRCIFDETQNGQCFYTNKKTNKLTLFARAY.

This sequence belongs to the class-II aminoacyl-tRNA synthetase family. ProS type 3 subfamily. Homodimer.

It is found in the cytoplasm. The enzyme catalyses tRNA(Pro) + L-proline + ATP = L-prolyl-tRNA(Pro) + AMP + diphosphate. In terms of biological role, catalyzes the attachment of proline to tRNA(Pro) in a two-step reaction: proline is first activated by ATP to form Pro-AMP and then transferred to the acceptor end of tRNA(Pro). The protein is Proline--tRNA ligase of Ureaplasma parvum serovar 3 (strain ATCC 27815 / 27 / NCTC 11736).